The chain runs to 512 residues: Ribose import ATP-binding protein RbsA 2 (512 aa).

ABC transporter domains lie at 7–242 (LEIR…VGRE) and 257–498 (LGEP…SGIG). 39 to 46 (GENGAGKS) contacts ATP.

Belongs to the ABC transporter superfamily. Ribose importer (TC 3.A.1.2.1) family. In terms of assembly, the complex is composed of an ATP-binding protein (RbsA), two transmembrane proteins (RbsC) and a solute-binding protein (RbsB).

The protein localises to the cell inner membrane. It carries out the reaction D-ribose(out) + ATP + H2O = D-ribose(in) + ADP + phosphate + H(+). Part of the ABC transporter complex RbsABC involved in ribose import. Responsible for energy coupling to the transport system. The protein is Ribose import ATP-binding protein RbsA 2 of Rhizobium meliloti (strain 1021) (Ensifer meliloti).